The following is a 500-amino-acid chain: Polyamine oxidase 1 (500 aa).

The first 28 residues, 1 to 28 (MSSSPSFGLLAVAALLLALSLAQHGSLA), serve as a signal peptide directing secretion. FAD contacts are provided by residues 42-43 (MS), Glu63, Arg71, and 87-88 (NW). Substrate is bound at residue Glu90. An N-linked (GlcNAc...) asparagine glycan is attached at Asn105. Residue Glu198 participates in substrate binding. FAD is bound by residues Val265, Tyr427, and Glu458. Gly466 contacts substrate. Residue 467 to 468 (YV) participates in FAD binding. The cysteines at positions 485 and 491 are disulfide-linked.

It belongs to the flavin monoamine oxidase family. As to quaternary structure, monomer. FAD serves as cofactor.

It is found in the secreted. The protein localises to the extracellular space. The protein resides in the apoplast. Its subcellular location is the cell wall. The enzyme catalyses spermidine + O2 + H2O = 4-aminobutanal + propane-1,3-diamine + H2O2. The catalysed reaction is N(8)-acetylspermidine + O2 + H2O = 4-acetamidobutanal + propane-1,3-diamine + H2O2. It carries out the reaction spermine + O2 + H2O = N-(3-aminopropyl)-4-aminobutanal + propane-1,3-diamine + H2O2. It catalyses the reaction N(1)-acetylspermine + O2 + H2O = N-(3-acetamidopropyl)-4-aminobutanal + propane-1,3-diamine + H2O2. Its pathway is amine and polyamine degradation; spermine degradation. Flavoenzyme involved in polyamine back-conversion. Catalyzes the oxidation of the secondary amino group of polyamines, such as spermine, spermidine and their acetyl derivatives. Plays an important role in the regulation of polyamine intracellular concentration. This Zea mays (Maize) protein is Polyamine oxidase 1.